A 110-amino-acid polypeptide reads, in one-letter code: UPF0102 protein HH_1751 (110 aa).

The protein belongs to the UPF0102 family.

This Helicobacter hepaticus (strain ATCC 51449 / 3B1) protein is UPF0102 protein HH_1751.